Reading from the N-terminus, the 73-residue chain is Translation initiation factor IF-1 (73 aa).

The S1-like domain maps to 1-73 (MSEKEAGIEV…SRGRITYRDK (73 aa)).

The protein belongs to the IF-1 family. As to quaternary structure, component of the 30S ribosomal translation pre-initiation complex which assembles on the 30S ribosome in the order IF-2 and IF-3, IF-1 and N-formylmethionyl-tRNA(fMet); mRNA recruitment can occur at any time during PIC assembly.

The protein resides in the cytoplasm. In terms of biological role, one of the essential components for the initiation of protein synthesis. Stabilizes the binding of IF-2 and IF-3 on the 30S subunit to which N-formylmethionyl-tRNA(fMet) subsequently binds. Helps modulate mRNA selection, yielding the 30S pre-initiation complex (PIC). Upon addition of the 50S ribosomal subunit IF-1, IF-2 and IF-3 are released leaving the mature 70S translation initiation complex. In Anaeromyxobacter dehalogenans (strain 2CP-C), this protein is Translation initiation factor IF-1.